Consider the following 710-residue polypeptide: Solute carrier organic anion transporter family member 3A1 (710 aa).

At Met1 the chain carries N-acetylmethionine. Residues Met1–Ser15 show a composition bias toward gly residues. The disordered stretch occupies residues Met1 to Arg25. The Cytoplasmic portion of the chain corresponds to Met1–Lys40. A helical transmembrane segment spans residues Ile41–Leu60. The Extracellular segment spans residues Val61 to Gly79. A helical transmembrane segment spans residues Val80–Gly100. The Cytoplasmic portion of the chain corresponds to Ala101–Pro106. A helical transmembrane segment spans residues Arg107–His131. Over Gln132 to Asn174 the chain is Extracellular. N-linked (GlcNAc...) asparagine glycosylation is found at Asn153 and Asn169. The chain crosses the membrane as a helical span at residues Met175–Asp203. Residues Asp204–Leu222 lie on the Cytoplasmic side of the membrane. The helical transmembrane segment at Val223 to Ala243 threads the bilayer. At Val244 to Ile261 the chain is on the extracellular side. Residues Gly262–Pro286 form a helical membrane-spanning segment. Topologically, residues Gln287–His344 are cytoplasmic. The chain crosses the membrane as a helical span at residues Leu345 to Ala366. Topologically, residues Gly367–Ser386 are extracellular. Asn381 is a glycosylation site (N-linked (GlcNAc...) asparagine). Residues Ala387–Val410 form a helical membrane-spanning segment. Residues Lys411–Ser414 lie on the Cytoplasmic side of the membrane. A helical transmembrane segment spans residues Leu415–Phe438. Topologically, residues Leu439 to Phe539 are extracellular. Asn457 carries an N-linked (GlcNAc...) asparagine glycan. The 49-residue stretch at Leu465–Thr513 folds into the Kazal-like domain. Intrachain disulfides connect Cys471-Cys501, Cys477-Cys497, and Cys486-Cys511. N-linked (GlcNAc...) asparagine glycans are attached at residues Asn502, Asn505, and Asn519. Residues Leu540–Ile562 form a helical membrane-spanning segment. Topologically, residues Arg563–Ser571 are cytoplasmic. Residues Tyr572–Ile597 traverse the membrane as a helical segment. Topologically, residues Asp598 to Ala630 are extracellular. The chain crosses the membrane as a helical span at residues Ile631 to Leu648. Residues Arg649–Asn705 are Cytoplasmic-facing.

This sequence belongs to the organo anion transporter (TC 2.A.60) family. As to expression, expressed in many brain regions, including frontal cortex, brain stem and cerebellum. Associated with neuronal bodies in a punctated matter. Detected at the arcuate nucleus and the choroid plexus (at protein level). Little expression, if any, in oligodendrocytes. In the cardiovascular system, detected in cardiac muscle cells and endothelial cells of aorta, coronary artery and left ventricular endocardium (at protein level). In the respiratory system, detected in alveolar epithelial cells and in mucosal epithelium of the trachea (at protein level). In the reproductive system, detected in spermatozoa, oocytes, smooth muscle cells of the ovary, epithelium of the glandula uterine, smooth muscle cells of the myometrium and epithelium of the endometrium (at protein level). In the kidney, detected in afferent and efferent arterioles, and the epithelium of distal tubules and collecting tubules (at protein level).

The protein resides in the basolateral cell membrane. It is found in the apical cell membrane. It localises to the basal cell membrane. It carries out the reaction L-thyroxine(out) = L-thyroxine(in). The catalysed reaction is prostaglandin E1(out) = prostaglandin E1(in). It catalyses the reaction prostaglandin E2(out) = prostaglandin E2(in). The enzyme catalyses prostaglandin F2alpha(out) = prostaglandin F2alpha(in). It carries out the reaction (5Z,8Z,11Z,14Z)-eicosatetraenoate(out) = (5Z,8Z,11Z,14Z)-eicosatetraenoate(in). The catalysed reaction is taurocholate(out) = taurocholate(in). It catalyses the reaction glycocholate(out) = glycocholate(in). The enzyme catalyses estrone 3-sulfate(out) = estrone 3-sulfate(in). It carries out the reaction argipressin(out) = argipressin(in). Functionally, putative organic anion antiporter with apparent broad substrate specificity. Recognizes various substrates including thyroid hormone L-thyroxine, prostanoids such as prostaglandin E1 and E2, bile acids such as taurocholate, glycolate and glycochenodeoxycholate and peptide hormones such as L-arginine vasopressin, likely operating in a tissue-specific manner. The transport mechanism, its electrogenicity and potential tissue-specific counterions remain to be elucidated. In Rattus norvegicus (Rat), this protein is Solute carrier organic anion transporter family member 3A1 (Slco3a1).